Here is a 102-residue protein sequence, read N- to C-terminus: Aspartyl/glutamyl-tRNA(Asn/Gln) amidotransferase subunit C (102 aa).

It belongs to the GatC family. As to quaternary structure, heterotrimer of A, B and C subunits.

The catalysed reaction is L-glutamyl-tRNA(Gln) + L-glutamine + ATP + H2O = L-glutaminyl-tRNA(Gln) + L-glutamate + ADP + phosphate + H(+). The enzyme catalyses L-aspartyl-tRNA(Asn) + L-glutamine + ATP + H2O = L-asparaginyl-tRNA(Asn) + L-glutamate + ADP + phosphate + 2 H(+). In terms of biological role, allows the formation of correctly charged Asn-tRNA(Asn) or Gln-tRNA(Gln) through the transamidation of misacylated Asp-tRNA(Asn) or Glu-tRNA(Gln) in organisms which lack either or both of asparaginyl-tRNA or glutaminyl-tRNA synthetases. The reaction takes place in the presence of glutamine and ATP through an activated phospho-Asp-tRNA(Asn) or phospho-Glu-tRNA(Gln). The protein is Aspartyl/glutamyl-tRNA(Asn/Gln) amidotransferase subunit C of Bordetella petrii (strain ATCC BAA-461 / DSM 12804 / CCUG 43448).